The following is a 402-amino-acid chain: Formate-dependent phosphoribosylglycinamide formyltransferase (402 aa).

N(1)-(5-phospho-beta-D-ribosyl)glycinamide is bound by residues 23–24 (EL) and E83. ATP is bound by residues R116, K157, 162 to 167 (SSGKGQ), 197 to 200 (ESQI), and E205. The ATP-grasp domain maps to 121–316 (RLAAEELGLP…EFELHARAIL (196 aa)). Mg(2+) contacts are provided by E275 and E287. N(1)-(5-phospho-beta-D-ribosyl)glycinamide-binding positions include D294, K363, and 370 to 371 (RR).

Belongs to the PurK/PurT family. Homodimer.

The enzyme catalyses N(1)-(5-phospho-beta-D-ribosyl)glycinamide + formate + ATP = N(2)-formyl-N(1)-(5-phospho-beta-D-ribosyl)glycinamide + ADP + phosphate + H(+). It functions in the pathway purine metabolism; IMP biosynthesis via de novo pathway; N(2)-formyl-N(1)-(5-phospho-D-ribosyl)glycinamide from N(1)-(5-phospho-D-ribosyl)glycinamide (formate route): step 1/1. Functionally, involved in the de novo purine biosynthesis. Catalyzes the transfer of formate to 5-phospho-ribosyl-glycinamide (GAR), producing 5-phospho-ribosyl-N-formylglycinamide (FGAR). Formate is provided by PurU via hydrolysis of 10-formyl-tetrahydrofolate. The chain is Formate-dependent phosphoribosylglycinamide formyltransferase from Acinetobacter baumannii (strain ATCC 17978 / DSM 105126 / CIP 53.77 / LMG 1025 / NCDC KC755 / 5377).